The primary structure comprises 482 residues: Glutamate--tRNA ligase (482 aa).

The 'HIGH' region signature appears at 9–19 (PSPTGYLHIGG). Residues 252-256 (KLSKR) carry the 'KMSKS' region motif. Residue lysine 255 coordinates ATP.

Belongs to the class-I aminoacyl-tRNA synthetase family. Glutamate--tRNA ligase type 1 subfamily. In terms of assembly, monomer.

It is found in the cytoplasm. The catalysed reaction is tRNA(Glu) + L-glutamate + ATP = L-glutamyl-tRNA(Glu) + AMP + diphosphate. Functionally, catalyzes the attachment of glutamate to tRNA(Glu) in a two-step reaction: glutamate is first activated by ATP to form Glu-AMP and then transferred to the acceptor end of tRNA(Glu). The chain is Glutamate--tRNA ligase from Ureaplasma parvum serovar 3 (strain ATCC 27815 / 27 / NCTC 11736).